The sequence spans 229 residues: 2,3-bisphosphoglycerate-dependent phosphoglycerate mutase (229 aa).

Substrate contacts are provided by residues R8–N15, T21–G22, R60, E87–Y90, K98, R114–R115, and G183–N184. The active-site Tele-phosphohistidine intermediate is the H9. Residue E87 is the Proton donor/acceptor of the active site.

Belongs to the phosphoglycerate mutase family. BPG-dependent PGAM subfamily. As to quaternary structure, homodimer.

The catalysed reaction is (2R)-2-phosphoglycerate = (2R)-3-phosphoglycerate. The protein operates within carbohydrate degradation; glycolysis; pyruvate from D-glyceraldehyde 3-phosphate: step 3/5. Functionally, catalyzes the interconversion of 2-phosphoglycerate and 3-phosphoglycerate. The sequence is that of 2,3-bisphosphoglycerate-dependent phosphoglycerate mutase from Polynucleobacter asymbioticus (strain DSM 18221 / CIP 109841 / QLW-P1DMWA-1) (Polynucleobacter necessarius subsp. asymbioticus).